The chain runs to 262 residues: GTP cyclohydrolase 1 type 2 homolog (262 aa).

4 residues coordinate a divalent metal cation: H65, D102, H222, and E225.

The protein belongs to the GTP cyclohydrolase I type 2/NIF3 family. Homohexamer.

The chain is GTP cyclohydrolase 1 type 2 homolog from Streptococcus pyogenes serotype M3 (strain ATCC BAA-595 / MGAS315).